We begin with the raw amino-acid sequence, 505 residues long: MERSPAVCCQDPRAELVERVAAISVAHLEEAEEGPEPASNGVDPPPRARAASVIPGSASRPTPVRPSLSARKFSLQERPAGSCLEAQVGPYSTGPASHMSPRAWRRPTIESHHVAISDTEDCVQLNQYKLQSEIGKGAYGVVRLAYNEREDRHYAMKVLSKKKLLKQYGFPRRPPPRGSQAPQGGPAKQLLPLERVYQEIAILKKLDHVNVVKLIEVLDDPAEDNLYLVFDLLRKGPVMEVPCDKPFPEEQARLYLRDIILGLEYLHCQKIVHRDIKPSNLLLGDDGHVKIADFGVSNQFEGNDAQLSSTAGTPAFMAPEAISDTGQSFSGKALDVWATGVTLYCFVYGKCPFIDEYILALHRKIKNEAVVFPEEPEVSEELKDLILKMLDKNPETRIGVSDIKLHPWVTKHGEEPLPSEEEHCSVVEVTEEEVKNSVKLIPSWTTVILVKSMLRKRSFGNPFEPQARREERSMSAPGNLLLKEGCGEGGKSPELPGVQEDEAAS.

The segment at 27–66 is disordered; it reads HLEEAEEGPEPASNGVDPPPRARAASVIPGSASRPTPVRP. A phosphoserine mark is found at Ser-67 and Ser-74. Arg-78 bears the Asymmetric dimethylarginine mark. Position 100 is a phosphoserine (Ser-100). Thr-108 carries the post-translational modification Phosphothreonine. The Protein kinase domain maps to 128 to 409; it reads YKLQSEIGKG…VSDIKLHPWV (282 aa). ATP is bound by residues 134-142 and Lys-157; that span reads IGKGAYGVV. The interval 167 to 189 is RP domain; that stretch reads QYGFPRRPPPRGSQAPQGGPAKQ. Asp-275 (proton acceptor) is an active-site residue. The interval 435–440 is autoinhibitory domain; that stretch reads KNSVKL. A calmodulin-binding region spans residues 438 to 463; the sequence is VKLIPSWTTVILVKSMLRKRSFGNPF. Phosphoserine occurs at positions 458, 475, and 492. Residues 460–505 form a disordered region; it reads GNPFEPQARREERSMSAPGNLLLKEGCGEGGKSPELPGVQEDEAAS.

Belongs to the protein kinase superfamily. Ser/Thr protein kinase family. Interacts with CAMK4 and calmodulin. In terms of processing, appears to be autophosphorylated. Phosphorylated at multiple sites by PRCAKA/PKA. Phosphorylation of Ser-458 is blocked upon binding to Ca(2+)/calmodulin. May be phosphorylated by CAMK1 and CAMK4. In terms of tissue distribution, mostly expressed in the brain with higher levels in cortex and hippocampus. Lower expression levels were detected in striatum, nucleus accumbens and cerebellum (at protein level). Abundant in forebrain, weaker in cerebellum and also detected in thymus and spleen.

It is found in the cytoplasm. The protein resides in the nucleus. It catalyses the reaction L-seryl-[protein] + ATP = O-phospho-L-seryl-[protein] + ADP + H(+). The enzyme catalyses L-threonyl-[protein] + ATP = O-phospho-L-threonyl-[protein] + ADP + H(+). Activated by Ca(2+)/calmodulin. Binding of calmodulin may relieve intrasteric autoinhibition. Partially inhibited upon phosphorylation by PRCAKA/PKA. May be regulated through phosphorylation by CAMK1 and CAMK4. Calcium/calmodulin-dependent protein kinase that belongs to a proposed calcium-triggered signaling cascade involved in a number of cellular processes. Phosphorylates CAMK1, CAMK1D, CAMK1G and CAMK4. Involved in regulating cell apoptosis. Promotes cell survival by phosphorylating AKT1/PKB that inhibits pro-apoptotic BAD/Bcl2-antagonist of cell death. The chain is Calcium/calmodulin-dependent protein kinase kinase 1 (Camkk1) from Rattus norvegicus (Rat).